The primary structure comprises 481 residues: Ribulose bisphosphate carboxylase large chain (481 aa).

The propeptide occupies Met-1–Ser-2. Pro-3 carries the post-translational modification N-acetylproline. Lys-14 carries the N6,N6,N6-trimethyllysine modification. Positions 123 and 173 each coordinate substrate. Lys-175 functions as the Proton acceptor in the catalytic mechanism. Lys-177 is a binding site for substrate. Residues Lys-201, Asp-203, and Glu-204 each contribute to the Mg(2+) site. N6-carboxylysine is present on Lys-201. His-294 acts as the Proton acceptor in catalysis. Substrate contacts are provided by Arg-295, His-327, and Ser-379.

It belongs to the RuBisCO large chain family. Type I subfamily. As to quaternary structure, heterohexadecamer of 8 large chains and 8 small chains; disulfide-linked. The disulfide link is formed within the large subunit homodimers. It depends on Mg(2+) as a cofactor. Post-translationally, the disulfide bond which can form in the large chain dimeric partners within the hexadecamer appears to be associated with oxidative stress and protein turnover.

The protein localises to the plastid. The enzyme catalyses 2 (2R)-3-phosphoglycerate + 2 H(+) = D-ribulose 1,5-bisphosphate + CO2 + H2O. It carries out the reaction D-ribulose 1,5-bisphosphate + O2 = 2-phosphoglycolate + (2R)-3-phosphoglycerate + 2 H(+). In terms of biological role, ruBisCO catalyzes two reactions: the carboxylation of D-ribulose 1,5-bisphosphate, the primary event in carbon dioxide fixation, as well as the oxidative fragmentation of the pentose substrate in the photorespiration process. Both reactions occur simultaneously and in competition at the same active site. The chain is Ribulose bisphosphate carboxylase large chain from Cuscuta gronovii (Common dodder).